A 755-amino-acid polypeptide reads, in one-letter code: Catalase-peroxidase (755 aa).

Positions W93–Y241 form a cross-link, tryptophyl-tyrosyl-methioninium (Trp-Tyr) (with M-267). Catalysis depends on H94, which acts as the Proton acceptor. Positions Y241 to M267 form a cross-link, tryptophyl-tyrosyl-methioninium (Tyr-Met) (with W-93). Residue H282 participates in heme b binding.

This sequence belongs to the peroxidase family. Peroxidase/catalase subfamily. Homodimer or homotetramer. Heme b is required as a cofactor. In terms of processing, formation of the three residue Trp-Tyr-Met cross-link is important for the catalase, but not the peroxidase activity of the enzyme.

It localises to the cytoplasm. It carries out the reaction H2O2 + AH2 = A + 2 H2O. It catalyses the reaction 2 H2O2 = O2 + 2 H2O. Its function is as follows. Bifunctional enzyme with both catalase and broad-spectrum peroxidase activity. The polypeptide is Catalase-peroxidase (Podospora anserina (strain S / ATCC MYA-4624 / DSM 980 / FGSC 10383) (Pleurage anserina)).